The primary structure comprises 187 residues: Protein GrpE (187 aa).

The segment at 1 to 26 is disordered; it reads MHDPKESLETNIQETESQEKLPETPI.

The protein belongs to the GrpE family. In terms of assembly, homodimer.

It localises to the cytoplasm. Functionally, participates actively in the response to hyperosmotic and heat shock by preventing the aggregation of stress-denatured proteins, in association with DnaK and GrpE. It is the nucleotide exchange factor for DnaK and may function as a thermosensor. Unfolded proteins bind initially to DnaJ; upon interaction with the DnaJ-bound protein, DnaK hydrolyzes its bound ATP, resulting in the formation of a stable complex. GrpE releases ADP from DnaK; ATP binding to DnaK triggers the release of the substrate protein, thus completing the reaction cycle. Several rounds of ATP-dependent interactions between DnaJ, DnaK and GrpE are required for fully efficient folding. The protein is Protein GrpE of Dichelobacter nodosus (strain VCS1703A).